The sequence spans 338 residues: Dihydroorotate dehydrogenase (quinone) (338 aa).

Residues 68–72 (AGMDK) and threonine 92 each bind FMN. Lysine 72 serves as a coordination point for substrate. 117–121 (NRMGF) serves as a coordination point for substrate. FMN is bound by residues serine 147 and asparagine 180. Asparagine 180 contacts substrate. Catalysis depends on serine 183, which acts as the Nucleophile. Asparagine 185 is a binding site for substrate. The FMN site is built by lysine 214 and threonine 242. Residue 243 to 244 (NT) participates in substrate binding. FMN-binding positions include glycine 267, glycine 296, and 317–318 (YT).

The protein belongs to the dihydroorotate dehydrogenase family. Type 2 subfamily. Monomer. FMN serves as cofactor.

Its subcellular location is the cell membrane. The catalysed reaction is (S)-dihydroorotate + a quinone = orotate + a quinol. It participates in pyrimidine metabolism; UMP biosynthesis via de novo pathway; orotate from (S)-dihydroorotate (quinone route): step 1/1. Catalyzes the conversion of dihydroorotate to orotate with quinone as electron acceptor. This Salinispora arenicola (strain CNS-205) protein is Dihydroorotate dehydrogenase (quinone).